The chain runs to 344 residues: Anamorsin homolog 1 (344 aa).

The interval 1 to 169 (MANNVGVLLA…DTGSVFQIRK (169 aa)) is N-terminal SAM-like domain. The linker stretch occupies residues 170–233 (KVSNQNGNFR…EDDLLTEEDL (64 aa)). Positions 244, 251, 254, and 256 each coordinate [2Fe-2S] cluster. The tract at residues 244 to 256 (CAPTKKACKNCTC) is fe-S binding site A. [4Fe-4S] cluster is bound by residues cysteine 282, cysteine 285, cysteine 293, and cysteine 296. 2 consecutive short sequence motifs (cx2C motif) follow at residues 282–285 (CGSC) and 293–296 (CAGC). The tract at residues 282–296 (CGSCGLGDAFRCAGC) is fe-S binding site B.

Belongs to the anamorsin family. As to quaternary structure, monomer. [2Fe-2S] cluster is required as a cofactor. [4Fe-4S] cluster serves as cofactor.

The protein resides in the cytoplasm. It is found in the mitochondrion intermembrane space. In terms of biological role, component of the cytosolic iron-sulfur (Fe-S) protein assembly (CIA) machinery. Required for the maturation of extramitochondrial Fe-S proteins. Part of an electron transfer chain functioning in an early step of cytosolic Fe-S biogenesis, facilitating the de novo assembly of a [4Fe-4S] cluster on the cytosolic Fe-S scaffold complex. Electrons are transferred from NADPH via a FAD- and FMN-containing diflavin oxidoreductase. Together with the diflavin oxidoreductase, also required for the assembly of the diferric tyrosyl radical cofactor of ribonucleotide reductase (RNR), probably by providing electrons for reduction during radical cofactor maturation in the catalytic small subunit. The chain is Anamorsin homolog 1 from Physcomitrium patens (Spreading-leaved earth moss).